A 57-amino-acid polypeptide reads, in one-letter code: MPAIQPPLYLTFLLLILLYLIITLYVWTILTITYKTTVRYAALYQRSFSRWGFDQSL.

Topologically, residues 1-8 are virion surface; sequence MPAIQPPL. The chain crosses the membrane as a helical span at residues 9–29; it reads YLTFLLLILLYLIITLYVWTI. Topologically, residues 30 to 57 are intravirion; that stretch reads LTITYKTTVRYAALYQRSFSRWGFDQSL.

The protein belongs to the rubulavirus small hydrophobic protein family. As to quaternary structure, interacts with host TNFRSF1A, RIPK1 and IRAK1; these interactions interfere with host NF-kappa-B activation at the level of receptor complexes. Interacts with host protein UBQLN4.

It localises to the virion membrane. Its subcellular location is the host cell membrane. Its function is as follows. Plays a role in the inhibition of the host NF-kappa-B pathway. This inhibition occurs at the receptor level, by preventing the signaling of TNFR1 as well as IL-1R and TLR3. The polypeptide is Small hydrophobic protein (SH) (Homo sapiens (Human)).